The following is a 326-amino-acid chain: Adenosine receptor A1 (326 aa).

Over 1-10 (MPPSISAFQA) the chain is Extracellular. Residues 11–33 (AYIGIEVLIALVSVPGNVLVIWA) form a helical membrane-spanning segment. Residues 34–46 (VKVNQALRDATFC) are Cytoplasmic-facing. Residues 47–69 (FIVSLAVADVAVGALVIPLAILI) traverse the membrane as a helical segment. The Extracellular segment spans residues 70-80 (NIGPQTYFHTC). The cysteines at positions 80 and 169 are disulfide-linked. The chain crosses the membrane as a helical span at residues 81 to 102 (LMVACPVLILTQSSILALLAIA). Topologically, residues 103–123 (VDRYLRVKIPLRYKMVVTPRR) are cytoplasmic. The helical transmembrane segment at 124 to 146 (AAVAIAGCWILSFVVGLTPMFGW) threads the bilayer. The Extracellular portion of the chain corresponds to 147-176 (NNLSAVERAWAANGSMGEPVIKCEFEKVIS). An N-linked (GlcNAc...) asparagine glycan is attached at asparagine 159. The chain crosses the membrane as a helical span at residues 177-201 (MEYMVYFNFFVWVLPPLLLMVLIYL). Residues 202–235 (EVFYLIRKQLNKKVSASSGDPQKYYGKELKIAKS) lie on the Cytoplasmic side of the membrane. Residues 236–259 (LALILFLFALSWLPLHILNCITLF) traverse the membrane as a helical segment. The Extracellular segment spans residues 260–267 (CPSCHKPS). The chain crosses the membrane as a helical span at residues 268–292 (ILTYIAIFLTHGNSAMNPIVYAFRI). Over 293–326 (QKFRVTFLKIWNDHFRCQPAPPIDEDLPEERPDD) the chain is Cytoplasmic. A lipid anchor (S-palmitoyl cysteine) is attached at cysteine 309.

Belongs to the G-protein coupled receptor 1 family.

It localises to the cell membrane. Receptor for adenosine. The activity of this receptor is mediated by G proteins which inhibit adenylyl cyclase. This chain is Adenosine receptor A1 (ADORA1), found in Homo sapiens (Human).